The primary structure comprises 362 residues: Biotin synthase (362 aa).

Residues 46–273 (NEVQVSTLLS…ASHVRLSAGR (228 aa)) form the Radical SAM core domain. Residues Cys-61, Cys-65, and Cys-68 each contribute to the [4Fe-4S] cluster site. Residues Cys-105, Cys-136, Cys-196, and Arg-268 each contribute to the [2Fe-2S] cluster site.

This sequence belongs to the radical SAM superfamily. Biotin synthase family. As to quaternary structure, homodimer. It depends on [4Fe-4S] cluster as a cofactor. Requires [2Fe-2S] cluster as cofactor.

It carries out the reaction (4R,5S)-dethiobiotin + (sulfur carrier)-SH + 2 reduced [2Fe-2S]-[ferredoxin] + 2 S-adenosyl-L-methionine = (sulfur carrier)-H + biotin + 2 5'-deoxyadenosine + 2 L-methionine + 2 oxidized [2Fe-2S]-[ferredoxin]. It participates in cofactor biosynthesis; biotin biosynthesis; biotin from 7,8-diaminononanoate: step 2/2. Catalyzes the conversion of dethiobiotin (DTB) to biotin by the insertion of a sulfur atom into dethiobiotin via a radical-based mechanism. This chain is Biotin synthase, found in Aeromonas salmonicida (strain A449).